A 152-amino-acid polypeptide reads, in one-letter code: UPF0179 protein Mlab_1307 (152 aa).

This sequence belongs to the UPF0179 family.

This is UPF0179 protein Mlab_1307 from Methanocorpusculum labreanum (strain ATCC 43576 / DSM 4855 / Z).